We begin with the raw amino-acid sequence, 388 residues long: Gastricsin (388 aa).

Positions 1-16 are cleaved as a signal peptide; that stretch reads MKWMVVVLVCLQLLEA. A propeptide spans 17–59 (activation peptide); the sequence is AVVKVPLKKFKSIRETMKEKGLLGEFLRTHKYDPAWKYRFGDL. In terms of domain architecture, Peptidase A1 spans 73-385; sequence YFGEISIGTP…DLGNNRVGFA (313 aa). Residue Asp91 is part of the active site. 2 cysteine pairs are disulfide-bonded: Cys104–Cys109 and Cys267–Cys271. Residue Asp276 is part of the active site. An intrachain disulfide couples Cys310 to Cys343.

It belongs to the peptidase A1 family.

Its subcellular location is the secreted. The catalysed reaction is More restricted specificity than pepsin A, but shows preferential cleavage at Tyr-|-Xaa bonds. High activity on hemoglobin.. In terms of biological role, hydrolyzes a variety of proteins. This chain is Gastricsin (PGC), found in Homo sapiens (Human).